Here is a 222-residue protein sequence, read N- to C-terminus: 2-C-methyl-D-erythritol 4-phosphate cytidylyltransferase (222 aa).

This sequence belongs to the IspD/TarI cytidylyltransferase family. IspD subfamily.

It catalyses the reaction 2-C-methyl-D-erythritol 4-phosphate + CTP + H(+) = 4-CDP-2-C-methyl-D-erythritol + diphosphate. It functions in the pathway isoprenoid biosynthesis; isopentenyl diphosphate biosynthesis via DXP pathway; isopentenyl diphosphate from 1-deoxy-D-xylulose 5-phosphate: step 2/6. In terms of biological role, catalyzes the formation of 4-diphosphocytidyl-2-C-methyl-D-erythritol from CTP and 2-C-methyl-D-erythritol 4-phosphate (MEP). The sequence is that of 2-C-methyl-D-erythritol 4-phosphate cytidylyltransferase from Thermotoga neapolitana (strain ATCC 49049 / DSM 4359 / NBRC 107923 / NS-E).